Consider the following 451-residue polypeptide: Phosphoglucosamine mutase (451 aa).

Catalysis depends on serine 102, which acts as the Phosphoserine intermediate. Residues serine 102, aspartate 244, aspartate 246, and aspartate 248 each contribute to the Mg(2+) site. Serine 102 is modified (phosphoserine).

It belongs to the phosphohexose mutase family. It depends on Mg(2+) as a cofactor. In terms of processing, activated by phosphorylation.

It carries out the reaction alpha-D-glucosamine 1-phosphate = D-glucosamine 6-phosphate. Catalyzes the conversion of glucosamine-6-phosphate to glucosamine-1-phosphate. This Lawsonia intracellularis (strain PHE/MN1-00) protein is Phosphoglucosamine mutase.